The chain runs to 436 residues: Tol-Pal system protein TolB (436 aa).

The signal sequence occupies residues 1 to 28; that stretch reads MMKCSFFRAILVAVGLMAAAVVATPANA.

This sequence belongs to the TolB family. As to quaternary structure, the Tol-Pal system is composed of five core proteins: the inner membrane proteins TolA, TolQ and TolR, the periplasmic protein TolB and the outer membrane protein Pal. They form a network linking the inner and outer membranes and the peptidoglycan layer.

The protein localises to the periplasm. In terms of biological role, part of the Tol-Pal system, which plays a role in outer membrane invagination during cell division and is important for maintaining outer membrane integrity. The polypeptide is Tol-Pal system protein TolB (Rhizobium etli (strain CIAT 652)).